A 429-amino-acid polypeptide reads, in one-letter code: Ubiquinone hydroxylase UbiL (429 aa).

The interval 1-22 is disordered; the sequence is MSEPLLRGLAAGDPPSATGPVT.

Belongs to the UbiH/COQ6 family. FAD serves as cofactor.

The catalysed reaction is a 2-(all-trans-polyprenyl)phenol + NADPH + O2 + H(+) = a 3-(all-trans-polyprenyl)benzene-1,2-diol + NADP(+) + H2O. Its pathway is cofactor biosynthesis; ubiquinone biosynthesis. Its function is as follows. Catalyzes the hydroxylation of two positions of the aromatic ring during ubiquinone biosynthesis. This Rhodospirillum rubrum (strain ATCC 11170 / ATH 1.1.1 / DSM 467 / LMG 4362 / NCIMB 8255 / S1) protein is Ubiquinone hydroxylase UbiL.